The following is an 87-amino-acid chain: Small ribosomal subunit protein uS17 (87 aa).

The protein belongs to the universal ribosomal protein uS17 family. In terms of assembly, part of the 30S ribosomal subunit.

One of the primary rRNA binding proteins, it binds specifically to the 5'-end of 16S ribosomal RNA. This chain is Small ribosomal subunit protein uS17, found in Bacillus pumilus (strain SAFR-032).